The following is a 141-amino-acid chain: Hemoglobin subunit alpha (141 aa).

One can recognise a Globin domain in the interval 1–141 (VLSPADKTNV…VSTVLTSKYR (141 aa)). Position 3 is a phosphoserine (S3). K7 is modified (N6-succinyllysine). Residue T8 is modified to Phosphothreonine. N6-succinyllysine is present on K11. K16 is modified (N6-acetyllysine; alternate). K16 carries the N6-succinyllysine; alternate modification. Y24 is subject to Phosphotyrosine. S35 carries the post-translational modification Phosphoserine. K40 carries the post-translational modification N6-succinyllysine. Residue S49 is modified to Phosphoserine. H58 lines the O2 pocket. H87 contributes to the heme b binding site. S102 is modified (phosphoserine). T108 bears the Phosphothreonine mark. Phosphoserine is present on residues S124 and S131. 2 positions are modified to phosphothreonine: T134 and T137. Position 138 is a phosphoserine (S138).

This sequence belongs to the globin family. As to quaternary structure, heterotetramer of two alpha chains and two beta chains. As to expression, red blood cells.

Functionally, involved in oxygen transport from the lung to the various peripheral tissues. In terms of biological role, hemopressin acts as an antagonist peptide of the cannabinoid receptor CNR1. Hemopressin-binding efficiently blocks cannabinoid receptor CNR1 and subsequent signaling. This is Hemoglobin subunit alpha (HBA) from Urocitellus parryii (Arctic ground squirrel).